The chain runs to 202 residues: GTP cyclohydrolase 1 (202 aa).

Positions 90, 93, and 163 each coordinate Zn(2+).

This sequence belongs to the GTP cyclohydrolase I family. As to quaternary structure, homomer.

It carries out the reaction GTP + H2O = 7,8-dihydroneopterin 3'-triphosphate + formate + H(+). It participates in cofactor biosynthesis; 7,8-dihydroneopterin triphosphate biosynthesis; 7,8-dihydroneopterin triphosphate from GTP: step 1/1. The polypeptide is GTP cyclohydrolase 1 (Mycolicibacterium gilvum (strain PYR-GCK) (Mycobacterium gilvum (strain PYR-GCK))).